A 475-amino-acid chain; its full sequence is MASAARLTMMWEEVTCPICLDPFVEPVSIECGHSFCQECISQVGKGGGSVCPVCRQRFLLKNLRPNRQLANMVNNLKEISQEAREGTQGERCAVHGERLHLFCEKDGKALCWVCAQSRKHRDHAMVPLEEAAQEYQEKLQVALGELRRKQELAEKLEVEIAIKRADWKKTVETQKSRIHAEFVQQKNFLVEEEQRQLQELEKDEREQLRILGEKEAKLAQQSQALQELISELDRRCHSSALELLQEVIIVLERSESWNLKDLDITSPELRSVCHVPGLKKMLRTCAVHITLDPDTANPWLILSEDRRQVRLGDTQQSIPGNEERFDSYPMVLGAQHFHSGKHYWEVDVTGKEAWDLGVCRDSVRRKGHFLLSSKSGFWTIWLWNKQKYEAGTYPQTPLHLQVPPCQVGIFLDYEAGMVSFYNITDHGSLIYSFSECAFTGPLRPFFSPGFNDGGKNTAPLTLCPLNIGSQGSTDY.

The segment at 16–55 adopts an RING-type zinc-finger fold; the sequence is CPICLDPFVEPVSIECGHSFCQECISQVGKGGGSVCPVCR. 4 residues coordinate Zn(2+): Cys92, His95, Cys114, and His120. The segment at 92–123 adopts a B box-type zinc-finger fold; that stretch reads CAVHGERLHLFCEKDGKALCWVCAQSRKHRDH. Residues 128 to 238 adopt a coiled-coil conformation; it reads LEEAAQEYQE…ISELDRRCHS (111 aa). Position 266 is a phosphoserine (Ser266). Positions 268 to 465 constitute a B30.2/SPRY domain; that stretch reads ELRSVCHVPG…NTAPLTLCPL (198 aa).

Belongs to the TRIM/RBCC family. As to quaternary structure, homotrimer. Interacts (via C-terminus) with IRF8 (via C-terminus). Component of a SCF(SKP2)-like complex containing CUL1, SKP1, TRIM21 and SKP2. Interacts with CALR, CUL1, FBXW11, HSPA5, IKBKB, IRF3, SKP1 and VCP. Interacts with SKP2; the interaction with SKP2 does not depend on an intact F-box domain. Interacts (via N-terminus and C-terminus) with DCP2 (via N-terminus and C-terminus). Interacts with ULK1, BECN1 and with ATG8 family members, including GABARAP, GABARAPL1, GABARAPL2 and MAP1LC3C/LC3C. Interacts with TRIM21 and SQSTM1/sequestosome 1. Interacts with IRF3. Interacts (via the SPRY domain) with NMI (via coiled-coil domain); the interaction promotes 'Lys-63'-linked ubiquitination of NMI. Interacts with IFI35 and NMI; the interaction facilitates NMI-IFI35 complex formation. In terms of assembly, (Microbial infection) Interacts (via B30.2/SPRY domain) with severe fever with thrombocytopenia syndrome virus (SFTSV) NSs; this interaction activates NFE2L2-mediated transcriptional activation of antioxidant genes. Autoubiquitinated; does not lead to its proteasomal degradation. Deubiquitinated by USP4; leading to its stabilization. As to expression, isoform 1 and isoform 2 are expressed in fetal and adult heart and fetal lung.

The protein resides in the cytoplasm. The protein localises to the cytoplasmic vesicle. It localises to the autophagosome. It is found in the nucleus. Its subcellular location is the P-body. The protein resides in the stress granule. The catalysed reaction is S-ubiquitinyl-[E2 ubiquitin-conjugating enzyme]-L-cysteine + [acceptor protein]-L-lysine = [E2 ubiquitin-conjugating enzyme]-L-cysteine + N(6)-ubiquitinyl-[acceptor protein]-L-lysine.. It functions in the pathway protein modification; protein ubiquitination. E3 ubiquitin-protein ligase whose activity is dependent on E2 enzymes, UBE2D1, UBE2D2, UBE2E1 and UBE2E2. Forms a ubiquitin ligase complex in cooperation with the E2 UBE2D2 that is used not only for the ubiquitination of USP4 and IKBKB but also for its self-ubiquitination. Component of cullin-RING-based SCF (SKP1-CUL1-F-box protein) E3 ubiquitin-protein ligase complexes such as SCF(SKP2)-like complexes. A TRIM21-containing SCF(SKP2)-like complex is shown to mediate ubiquitination of CDKN1B ('Thr-187' phosphorylated-form), thereby promoting its degradation by the proteasome. Monoubiquitinates IKBKB that will negatively regulates Tax-induced NF-kappa-B signaling. Negatively regulates IFN-beta production post-pathogen recognition by catalyzing polyubiquitin-mediated degradation of IRF3. Mediates the ubiquitin-mediated proteasomal degradation of IgG1 heavy chain, which is linked to the VCP-mediated ER-associated degradation (ERAD) pathway. Promotes IRF8 ubiquitination, which enhanced the ability of IRF8 to stimulate cytokine genes transcription in macrophages. Plays a role in the regulation of the cell cycle progression. Enhances the decapping activity of DCP2. Exists as a ribonucleoprotein particle present in all mammalian cells studied and composed of a single polypeptide and one of four small RNA molecules. At least two isoforms are present in nucleated and red blood cells, and tissue specific differences in RO/SSA proteins have been identified. The common feature of these proteins is their ability to bind HY RNAs.2. Involved in the regulation of innate immunity and the inflammatory response in response to IFNG/IFN-gamma. Organizes autophagic machinery by serving as a platform for the assembly of ULK1, Beclin 1/BECN1 and ATG8 family members and recognizes specific autophagy targets, thus coordinating target recognition with assembly of the autophagic apparatus and initiation of autophagy. Also regulates autophagy through FIP200/RB1CC1 ubiquitination and subsequent decreased protein stability. Represses the innate antiviral response by facilitating the formation of the NMI-IFI35 complex through 'Lys-63'-linked ubiquitination of NMI. During viral infection, promotes cell pyroptosis by mediating 'Lys-6'-linked ubiquitination of ISG12a/IFI27, facilitating its translocation into the mitochondria and subsequent CASP3 activation. When up-regulated through the IFN/JAK/STAT signaling pathway, promotes 'Lys-27'-linked ubiquitination of MAVS, leading to the recruitment of TBK1 and up-regulation of innate immunity. Mediates 'Lys-63'-linked polyubiquitination of G3BP1 in response to heat shock, leading to stress granule disassembly. The polypeptide is E3 ubiquitin-protein ligase TRIM21 (Homo sapiens (Human)).